Consider the following 670-residue polypeptide: MTFSVQHAEIHFNQNHIPVSDQFDDVYFSNENGLAETDYVFLQGNQLWERWITHKEANFVIAETGFGTGLNFFAATKLFRKFRQQHENHPLKRLNFISFEKYPLKITALSQAHLACPQFEDLSAHLQRYWPSLILGCHRIHFEETTLDLWFGDVSENLPQLGDYMNERIDAWFLDGFAPSKNPEMWNDDLYNLIFRFTKPNGTFATFTAASAVRKGLESAGFNVTKRKGFGKKRECLSGLKIQSKSTALSTPWYLAQPAKMEKQDFAIIGGGIASLCAAISLVKRGAKVTIYCEDAALALNASGNKQGAFYPQLSDDNVLTVDFYLHAFSYGRQLLDWAIEQNIAFEHEFCGVALCAYNEKSAVKLTKISQLGLPNEIFQMLSAEQLSEKVGLPLNCEGGWIEQGAWLAPRQFVQNAFSFLEKQGVIIKTAQKITALSQEEKGWELKNMQGQKYCHEVVILANGHKITDFVQTEKLPLYPIRGQVSQIPTSENLLKLKSVLCYDGYLTPANQLKTSHCIGASHVRDNVDRHFSEQEQQENQQKLQQNIAQPWTQDVNTSDNLARVGIRCSVRDLAPMVGNVPHFEQQQAGYYNLFNLRRRKQPIQSAVNFQNIFLIAALGSRGLTSAPLLGETLASILYGEPLPISEGILHNLSANRAWVKKWLKGSKVE.

The segment at 1–242 (MTFSVQHAEI…KRECLSGLKI (242 aa)) is tRNA (mnm(5)s(2)U34)-methyltransferase. Residues 269–670 (IGGGIASLCA…KKWLKGSKVE (402 aa)) are FAD-dependent cmnm(5)s(2)U34 oxidoreductase.

It in the N-terminal section; belongs to the methyltransferase superfamily. tRNA (mnm(5)s(2)U34)-methyltransferase family. The protein in the C-terminal section; belongs to the DAO family. FAD serves as cofactor.

The protein resides in the cytoplasm. The enzyme catalyses 5-aminomethyl-2-thiouridine(34) in tRNA + S-adenosyl-L-methionine = 5-methylaminomethyl-2-thiouridine(34) in tRNA + S-adenosyl-L-homocysteine + H(+). Catalyzes the last two steps in the biosynthesis of 5-methylaminomethyl-2-thiouridine (mnm(5)s(2)U) at the wobble position (U34) in tRNA. Catalyzes the FAD-dependent demodification of cmnm(5)s(2)U34 to nm(5)s(2)U34, followed by the transfer of a methyl group from S-adenosyl-L-methionine to nm(5)s(2)U34, to form mnm(5)s(2)U34. In Haemophilus influenzae (strain PittGG), this protein is tRNA 5-methylaminomethyl-2-thiouridine biosynthesis bifunctional protein MnmC.